The chain runs to 212 residues: Probable nicotinate-nucleotide adenylyltransferase (212 aa).

This sequence belongs to the NadD family.

The enzyme catalyses nicotinate beta-D-ribonucleotide + ATP + H(+) = deamido-NAD(+) + diphosphate. It participates in cofactor biosynthesis; NAD(+) biosynthesis; deamido-NAD(+) from nicotinate D-ribonucleotide: step 1/1. Catalyzes the reversible adenylation of nicotinate mononucleotide (NaMN) to nicotinic acid adenine dinucleotide (NaAD). The polypeptide is Probable nicotinate-nucleotide adenylyltransferase (Mycobacterium avium (strain 104)).